Consider the following 260-residue polypeptide: FAS1 domain-containing protein SELMODRAFT_448915 (260 aa).

The Cytoplasmic segment spans residues 1–35; it reads MRRTGRSYKPLLSQLKDHHIPVHPSSRAERAMESR. Residues 36–58 form a helical membrane-spanning segment; it reads TLLVLLFVGVVTIVSSGLERAAA. The 140-residue stretch at 59–198 folds into the FAS1 domain; that stretch reads QDDTDDGILP…IACHGIDRVL (140 aa). Over 59–260 the chain is Extracellular; the sequence is QDDTDDGILP…SSASRYPVSE (202 aa). N-linked (GlcNAc...) asparagine glycosylation is found at Asn-118, Asn-169, Asn-176, Asn-201, Asn-236, and Asn-247. The tract at residues 210-260 is disordered; sequence PEASPPFGAEQASPAPEALPPGTRSPNNTANPSNRKSNSTRSSASRYPVSE. The segment covering 233-254 has biased composition (polar residues); the sequence is RSPNNTANPSNRKSNSTRSSAS.

The protein resides in the membrane. The polypeptide is FAS1 domain-containing protein SELMODRAFT_448915 (Selaginella moellendorffii (Spikemoss)).